The following is a 118-amino-acid chain: V-type proton ATPase subunit G 2 (118 aa).

The interval 25-90 is disordered; it reads ARKRKARRLK…VQGMQSSQQR (66 aa). Residues 35–56 are compositionally biased toward basic and acidic residues; it reads QAKEEAQMEVEQYRREREHEFQ. Polar residues-rich tracts occupy residues 57–69 and 78–89; these read SKQQ…QGNL and RRQVQGMQSSQQ.

This sequence belongs to the V-ATPase G subunit family. In terms of assembly, V-ATPase is a heteromultimeric enzyme made up of two complexes: the ATP-hydrolytic V1 complex and the proton translocation V0 complex. The V1 complex consists of three catalytic AB heterodimers that form a heterohexamer, three peripheral stalks each consisting of EG heterodimers, one central rotor including subunits D and F, and the regulatory subunits C and H. The proton translocation complex V0 consists of the proton transport subunit a, a ring of proteolipid subunits c9c'', rotary subunit d, subunits e and f, and the accessory subunits ATP6AP1/Ac45 and ATP6AP2/PRR. In terms of tissue distribution, brain.

It is found in the melanosome. The protein localises to the cytoplasmic vesicle. The protein resides in the clathrin-coated vesicle membrane. Its function is as follows. Subunit of the V1 complex of vacuolar(H+)-ATPase (V-ATPase), a multisubunit enzyme composed of a peripheral complex (V1) that hydrolyzes ATP and a membrane integral complex (V0) that translocates protons. V-ATPase is responsible for acidifying and maintaining the pH of intracellular compartments and in some cell types, is targeted to the plasma membrane, where it is responsible for acidifying the extracellular environment. In Homo sapiens (Human), this protein is V-type proton ATPase subunit G 2 (ATP6V1G2).